Reading from the N-terminus, the 43-residue chain is Photosystem I reaction center subunit IX (43 aa).

The chain crosses the membrane as a helical span at residues 7–27; that stretch reads YLSTAPVLATFWFGLLAGLLI.

Belongs to the PsaJ family.

It localises to the plastid. It is found in the chloroplast thylakoid membrane. In terms of biological role, may help in the organization of the PsaE and PsaF subunits. The protein is Photosystem I reaction center subunit IX of Gnetum parvifolium (Small-leaved jointfir).